The primary structure comprises 355 residues: Fructose-1,6-bisphosphatase class 1 (355 aa).

4 residues coordinate Mg(2+): Glu-94, Asp-116, Leu-118, and Asp-119. Residues Asp-119 to Ser-122, Asn-211, and Tyr-263 to Tyr-265 contribute to the substrate site. Mg(2+) is bound at residue Glu-283.

The protein belongs to the FBPase class 1 family. Homotetramer. It depends on Mg(2+) as a cofactor.

The protein localises to the cytoplasm. The catalysed reaction is beta-D-fructose 1,6-bisphosphate + H2O = beta-D-fructose 6-phosphate + phosphate. It participates in carbohydrate biosynthesis; Calvin cycle. This Rhodospirillum rubrum (strain ATCC 11170 / ATH 1.1.1 / DSM 467 / LMG 4362 / NCIMB 8255 / S1) protein is Fructose-1,6-bisphosphatase class 1.